The sequence spans 337 residues: Holliday junction branch migration complex subunit RuvB (337 aa).

The large ATPase domain (RuvB-L) stretch occupies residues 4-184 (QDRIISAELK…FGIVQRLEFY (181 aa)). ATP is bound by residues isoleucine 23, arginine 24, glycine 65, lysine 68, threonine 69, threonine 70, 131–133 (EDY), arginine 174, tyrosine 184, and arginine 221. Threonine 69 lines the Mg(2+) pocket. Residues 185 to 255 (DVESLTTIVA…VAQRALDMLS (71 aa)) are small ATPAse domain (RuvB-S). Residues 258 to 337 (SQGFDHLDRR…FNYQLPSDFK (80 aa)) form a head domain (RuvB-H) region. DNA contacts are provided by arginine 313 and arginine 318.

The protein belongs to the RuvB family. Homohexamer. Forms an RuvA(8)-RuvB(12)-Holliday junction (HJ) complex. HJ DNA is sandwiched between 2 RuvA tetramers; dsDNA enters through RuvA and exits via RuvB. An RuvB hexamer assembles on each DNA strand where it exits the tetramer. Each RuvB hexamer is contacted by two RuvA subunits (via domain III) on 2 adjacent RuvB subunits; this complex drives branch migration. In the full resolvosome a probable DNA-RuvA(4)-RuvB(12)-RuvC(2) complex forms which resolves the HJ.

The protein localises to the cytoplasm. The enzyme catalyses ATP + H2O = ADP + phosphate + H(+). Functionally, the RuvA-RuvB-RuvC complex processes Holliday junction (HJ) DNA during genetic recombination and DNA repair, while the RuvA-RuvB complex plays an important role in the rescue of blocked DNA replication forks via replication fork reversal (RFR). RuvA specifically binds to HJ cruciform DNA, conferring on it an open structure. The RuvB hexamer acts as an ATP-dependent pump, pulling dsDNA into and through the RuvAB complex. RuvB forms 2 homohexamers on either side of HJ DNA bound by 1 or 2 RuvA tetramers; 4 subunits per hexamer contact DNA at a time. Coordinated motions by a converter formed by DNA-disengaged RuvB subunits stimulates ATP hydrolysis and nucleotide exchange. Immobilization of the converter enables RuvB to convert the ATP-contained energy into a lever motion, pulling 2 nucleotides of DNA out of the RuvA tetramer per ATP hydrolyzed, thus driving DNA branch migration. The RuvB motors rotate together with the DNA substrate, which together with the progressing nucleotide cycle form the mechanistic basis for DNA recombination by continuous HJ branch migration. Branch migration allows RuvC to scan DNA until it finds its consensus sequence, where it cleaves and resolves cruciform DNA. In Marinomonas sp. (strain MWYL1), this protein is Holliday junction branch migration complex subunit RuvB.